We begin with the raw amino-acid sequence, 272 residues long: Tryptophan synthase alpha chain (272 aa).

Active-site proton acceptor residues include E49 and D60.

Belongs to the TrpA family. Tetramer of two alpha and two beta chains.

It catalyses the reaction (1S,2R)-1-C-(indol-3-yl)glycerol 3-phosphate + L-serine = D-glyceraldehyde 3-phosphate + L-tryptophan + H2O. Its pathway is amino-acid biosynthesis; L-tryptophan biosynthesis; L-tryptophan from chorismate: step 5/5. In terms of biological role, the alpha subunit is responsible for the aldol cleavage of indoleglycerol phosphate to indole and glyceraldehyde 3-phosphate. In Polaromonas naphthalenivorans (strain CJ2), this protein is Tryptophan synthase alpha chain.